Consider the following 293-residue polypeptide: Elongation factor Ts (293 aa).

The interval 80–83 (TDFV) is involved in Mg(2+) ion dislocation from EF-Tu.

It belongs to the EF-Ts family.

It localises to the cytoplasm. Associates with the EF-Tu.GDP complex and induces the exchange of GDP to GTP. It remains bound to the aminoacyl-tRNA.EF-Tu.GTP complex up to the GTP hydrolysis stage on the ribosome. This Herminiimonas arsenicoxydans protein is Elongation factor Ts.